The primary structure comprises 362 residues: Glutamine synthetase (362 aa).

In terms of domain architecture, GS beta-grasp spans 26–107 (LIAEYIWIDS…VLSECWNADG (82 aa)). The GS catalytic domain occupies 114-362 (HRHEAAKLME…METCFGAVSE (249 aa)).

The protein belongs to the glutamine synthetase family. Homooctamer.

It localises to the cytoplasm. The catalysed reaction is L-glutamate + NH4(+) + ATP = L-glutamine + ADP + phosphate + H(+). This Neurospora crassa (strain ATCC 24698 / 74-OR23-1A / CBS 708.71 / DSM 1257 / FGSC 987) protein is Glutamine synthetase (gln-1).